A 204-amino-acid polypeptide reads, in one-letter code: Small ribosomal subunit protein uS4 (204 aa).

One can recognise an S4 RNA-binding domain in the interval 93–156 (SRLSSVLYHS…AKIPVIVEAV (64 aa)).

This sequence belongs to the universal ribosomal protein uS4 family. In terms of assembly, part of the 30S ribosomal subunit. Contacts protein S5. The interaction surface between S4 and S5 is involved in control of translational fidelity.

One of the primary rRNA binding proteins, it binds directly to 16S rRNA where it nucleates assembly of the body of the 30S subunit. In terms of biological role, with S5 and S12 plays an important role in translational accuracy. This Wolbachia sp. subsp. Brugia malayi (strain TRS) protein is Small ribosomal subunit protein uS4.